Consider the following 110-residue polypeptide: UPF0122 protein SAR1212 (110 aa).

It belongs to the UPF0122 family.

In terms of biological role, might take part in the signal recognition particle (SRP) pathway. This is inferred from the conservation of its genetic proximity to ftsY/ffh. May be a regulatory protein. The sequence is that of UPF0122 protein SAR1212 from Staphylococcus aureus (strain MRSA252).